Consider the following 214-residue polypeptide: Octanoyltransferase (214 aa).

A BPL/LPL catalytic domain is found at 29–214 (STTPDEIWIL…EHLQKQLMPT (186 aa)). Residues 69–76 (RGGEITYH), 146–148 (ALG), and 159–161 (GLA) contribute to the substrate site. The active-site Acyl-thioester intermediate is the C177.

This sequence belongs to the LipB family.

It is found in the cytoplasm. The catalysed reaction is octanoyl-[ACP] + L-lysyl-[protein] = N(6)-octanoyl-L-lysyl-[protein] + holo-[ACP] + H(+). It functions in the pathway protein modification; protein lipoylation via endogenous pathway; protein N(6)-(lipoyl)lysine from octanoyl-[acyl-carrier-protein]: step 1/2. Catalyzes the transfer of endogenously produced octanoic acid from octanoyl-acyl-carrier-protein onto the lipoyl domains of lipoate-dependent enzymes. Lipoyl-ACP can also act as a substrate although octanoyl-ACP is likely to be the physiological substrate. This Polynucleobacter asymbioticus (strain DSM 18221 / CIP 109841 / QLW-P1DMWA-1) (Polynucleobacter necessarius subsp. asymbioticus) protein is Octanoyltransferase.